The following is a 99-amino-acid chain: Defensin-like protein 2 (99 aa).

The first 30 residues, 1–30 (MAMAKKSVSSFTLIFILVLVIFEVPEIKAQ), serve as a signal peptide directing secretion. 4 disulfide bridges follow: Cys34–Cys86, Cys47–Cys71, Cys56–Cys81, and Cys60–Cys83. Residues 94-99 (ILRGGI) constitute a propeptide that is removed on maturation.

The protein belongs to the DEFL family. Protease inhibitor I18 (RTI/MTI-2) subfamily.

It is found in the secreted. Its function is as follows. Inhibits bovine beta-trypsin and alpha-chymotrypsin on a 1:1 molar basis. In Sinapis alba (White mustard), this protein is Defensin-like protein 2.